Consider the following 463-residue polypeptide: D-inositol 3-phosphate glycosyltransferase (463 aa).

A 1D-myo-inositol 3-phosphate-binding site is contributed by histidine 40. Residues 46–47 (QP) and glycine 54 each bind UDP-N-acetyl-alpha-D-glucosamine. 1D-myo-inositol 3-phosphate contacts are provided by residues 51-56 (DAGGMN), lysine 109, tyrosine 142, threonine 166, and arginine 186. Residues arginine 260, lysine 265, and glutamine 318 each contribute to the UDP-N-acetyl-alpha-D-glucosamine site. Mg(2+)-binding residues include phenylalanine 327, histidine 328, and valine 330. Residues glutamate 340 and glutamate 348 each contribute to the UDP-N-acetyl-alpha-D-glucosamine site. Threonine 354 is a binding site for Mg(2+). The disordered stretch occupies residues 443 to 463 (VRDPVAARKPRRWTARRGVGA).

It belongs to the glycosyltransferase group 1 family. MshA subfamily. As to quaternary structure, homodimer.

It carries out the reaction 1D-myo-inositol 3-phosphate + UDP-N-acetyl-alpha-D-glucosamine = 1D-myo-inositol 2-acetamido-2-deoxy-alpha-D-glucopyranoside 3-phosphate + UDP + H(+). Its function is as follows. Catalyzes the transfer of a N-acetyl-glucosamine moiety to 1D-myo-inositol 3-phosphate to produce 1D-myo-inositol 2-acetamido-2-deoxy-glucopyranoside 3-phosphate in the mycothiol biosynthesis pathway. The sequence is that of D-inositol 3-phosphate glycosyltransferase from Mycobacterium ulcerans (strain Agy99).